The chain runs to 103 residues: MLIIKAILRTEIKKSITRKIRKNGGCPAVIYNKNKSPNINVQLSNKDLSHPENVHYFLKNNKVQILINNEFTITAKIQDVQYHPYKSNIIHIDFIHITTQSRS.

This sequence belongs to the bacterial ribosomal protein bL25 family. In terms of assembly, part of the 50S ribosomal subunit; part of the 5S rRNA/L5/L18/L25 subcomplex. Contacts the 5S rRNA. Binds to the 5S rRNA independently of L5 and L18.

Functionally, this is one of the proteins that binds to the 5S RNA in the ribosome where it forms part of the central protuberance. The polypeptide is Large ribosomal subunit protein bL25 (Blochmanniella floridana).